The sequence spans 303 residues: tRNA dimethylallyltransferase (303 aa).

Position 13–20 (13–20 (GPTASGKS)) interacts with ATP. Residue 15-20 (TASGKS) coordinates substrate. Interaction with substrate tRNA stretches follow at residues 38–41 (DSMQ) and 162–166 (QRLLR).

Belongs to the IPP transferase family. Monomer. Mg(2+) serves as cofactor.

It carries out the reaction adenosine(37) in tRNA + dimethylallyl diphosphate = N(6)-dimethylallyladenosine(37) in tRNA + diphosphate. Its function is as follows. Catalyzes the transfer of a dimethylallyl group onto the adenine at position 37 in tRNAs that read codons beginning with uridine, leading to the formation of N6-(dimethylallyl)adenosine (i(6)A). This chain is tRNA dimethylallyltransferase, found in Methylocella silvestris (strain DSM 15510 / CIP 108128 / LMG 27833 / NCIMB 13906 / BL2).